Here is a 1258-residue protein sequence, read N- to C-terminus: Regulator of G-protein signaling 22 (1258 aa).

The interval 581-604 (QQLGRSEPLNAVSSKDGGLEKGSK) is disordered. RGS domains lie at 845–973 (TFTD…ASRQ) and 1014–1138 (AFRK…TDEK). The segment at 1145–1172 (RRQEHKQKRKASDTEEDKAGKSGVKQYA) is disordered. The segment covering 1154–1164 (KASDTEEDKAG) has biased composition (basic and acidic residues).

As to quaternary structure, interacts with GNA11, GNA12 and GNA13. Expressed testis, including in Leydig cells and spermatogenic cells from the spermatogonia to spermatid stages (at protein level).

Its subcellular location is the cytoplasm. The protein localises to the nucleus. In terms of biological role, inhibits signal transduction by increasing the GTPase activity of G protein alpha subunits thereby driving them into their inactive GDP-bound form. This chain is Regulator of G-protein signaling 22 (Rgs22), found in Mus musculus (Mouse).